Consider the following 209-residue polypeptide: COP9 signalosome complex subunit 8 (209 aa).

The PCI domain maps to 8-179; it reads ESAFSFKKLL…GALDVSFNKF (172 aa). Position 175 is a phosphoserine (serine 175).

The protein belongs to the CSN8 family. Component of the CSN complex, composed of COPS1/GPS1, COPS2, COPS3, COPS4, COPS5, COPS6, COPS7 (COPS7A or COPS7B), COPS8 and COPS9 isoform 1. In the complex, it probably interacts directly with COPS3, COPS4 and COPS7 (COPS7A or COPS7B).

It localises to the cytoplasm. The protein resides in the nucleus. Functionally, component of the COP9 signalosome complex (CSN), a complex involved in various cellular and developmental processes. The CSN complex is an essential regulator of the ubiquitin (Ubl) conjugation pathway by mediating the deneddylation of the cullin subunits of SCF-type E3 ligase complexes, leading to decrease the Ubl ligase activity of SCF-type complexes such as SCF, CSA or DDB2. The complex is also involved in phosphorylation of p53/TP53, c-jun/JUN, IkappaBalpha/NFKBIA, ITPK1 and IRF8/ICSBP, possibly via its association with CK2 and PKD kinases. CSN-dependent phosphorylation of TP53 and JUN promotes and protects degradation by the Ubl system, respectively. The chain is COP9 signalosome complex subunit 8 (COPS8) from Homo sapiens (Human).